The primary structure comprises 359 residues: Guanine nucleotide-binding protein subunit alpha-11 (359 aa).

2 S-palmitoyl cysteine lipidation sites follow: Cys-9 and Cys-10. The region spanning 38 to 359 (RELKLLLLGT…QLNLKEYNLV (322 aa)) is the G-alpha domain. A G1 motif region spans residues 41 to 54 (KLLLLGTGESGKST). Residues 46–53 (GTGESGKS) and 180–183 (LRVR) each bind GTP. Residue Ser-53 participates in Mg(2+) binding. Positions 178 to 186 (DVLRVRVPT) are G2 motif. Residue Thr-186 participates in Mg(2+) binding. Positions 201-210 (FRMVDVGGQR) are G3 motif. Gln-209 carries the post-translational modification Deamidated glutamine; by Photorhabdus PAU_02230. Residues 270-277 (ILFLNKKD) are G4 motif. Residues 274-277 (NKKD) and Ala-331 contribute to the GTP site. A G5 motif region spans residues 329-334 (TCATDT).

Belongs to the G-alpha family. G(q) subfamily. In terms of assembly, g proteins are composed of 3 units; alpha, beta and gamma. The alpha chain contains the guanine nucleotide binding site. Interacts with RGS22. Interacts with NTSR1. As to quaternary structure, (Microbial infection) Interacts with human cytomegalovirus (HHV-5) US28. In terms of processing, (Microbial infection) Deamidated at Gln-209 by Photorhabdus asymbiotica toxin PAU_02230, blocking GTP hydrolysis of heterotrimeric GNAQ or GNA11 and G-alphai (GNAI1, GNAI2 or GNAI3) proteins, thereby activating RhoA. In terms of tissue distribution, expressed in testis.

The protein resides in the cell membrane. It localises to the cytoplasm. The enzyme catalyses GTP + H2O = GDP + phosphate + H(+). Its function is as follows. Guanine nucleotide-binding proteins (G proteins) function as transducers downstream of G protein-coupled receptors (GPCRs) in numerous signaling cascades. The alpha chain contains the guanine nucleotide binding site and alternates between an active, GTP-bound state and an inactive, GDP-bound state. Signaling by an activated GPCR promotes GDP release and GTP binding. The alpha subunit has a low GTPase activity that converts bound GTP to GDP, thereby terminating the signal. Both GDP release and GTP hydrolysis are modulated by numerous regulatory proteins. Signaling is mediated via phospholipase C-beta-dependent inositol lipid hydrolysis for signal propagation: activates phospholipase C-beta: following GPCR activation, GNA11 activates PLC-beta (PLCB1, PLCB2, PLCB3 or PLCB4), leading to production of diacylglycerol (DAG) and inositol 1,4,5-trisphosphate (IP3). Transduces FFAR4 signaling in response to long-chain fatty acids (LCFAs). Together with GNAQ, required for heart development. In the respiratory epithelium, transmits OXGR1-dependent signals that lead to downstream intracellular Ca(2+) release and mucocilliary clearance of airborne pathogens. The polypeptide is Guanine nucleotide-binding protein subunit alpha-11 (GNA11) (Homo sapiens (Human)).